We begin with the raw amino-acid sequence, 263 residues long: 5'-nucleotidase SurE (263 aa).

A divalent metal cation-binding residues include Asp8, Asp9, Ser40, and Asn98.

Belongs to the SurE nucleotidase family. A divalent metal cation is required as a cofactor.

Its subcellular location is the cytoplasm. The catalysed reaction is a ribonucleoside 5'-phosphate + H2O = a ribonucleoside + phosphate. Functionally, nucleotidase that shows phosphatase activity on nucleoside 5'-monophosphates. This is 5'-nucleotidase SurE from Gloeobacter violaceus (strain ATCC 29082 / PCC 7421).